The chain runs to 364 residues: Probable dual-specificity RNA methyltransferase RlmN (364 aa).

Catalysis depends on glutamate 107, which acts as the Proton acceptor. Residues 113-346 (HNYGNSVCVT…VTIRREHGHD (234 aa)) enclose the Radical SAM core domain. A disulfide bond links cysteine 120 and cysteine 351. [4Fe-4S] cluster contacts are provided by cysteine 127, cysteine 131, and cysteine 134. S-adenosyl-L-methionine contacts are provided by residues 177–178 (GE), serine 209, 232–234 (SLH), and asparagine 308. Cysteine 351 acts as the S-methylcysteine intermediate in catalysis.

Belongs to the radical SAM superfamily. RlmN family. Requires [4Fe-4S] cluster as cofactor.

The protein resides in the cytoplasm. It catalyses the reaction adenosine(2503) in 23S rRNA + 2 reduced [2Fe-2S]-[ferredoxin] + 2 S-adenosyl-L-methionine = 2-methyladenosine(2503) in 23S rRNA + 5'-deoxyadenosine + L-methionine + 2 oxidized [2Fe-2S]-[ferredoxin] + S-adenosyl-L-homocysteine. The enzyme catalyses adenosine(37) in tRNA + 2 reduced [2Fe-2S]-[ferredoxin] + 2 S-adenosyl-L-methionine = 2-methyladenosine(37) in tRNA + 5'-deoxyadenosine + L-methionine + 2 oxidized [2Fe-2S]-[ferredoxin] + S-adenosyl-L-homocysteine. Specifically methylates position 2 of adenine 2503 in 23S rRNA and position 2 of adenine 37 in tRNAs. This Geobacillus thermodenitrificans (strain NG80-2) protein is Probable dual-specificity RNA methyltransferase RlmN.